A 119-amino-acid chain; its full sequence is uncharacterized protein (119 aa).

Transmembrane regions (helical) follow at residues 19–39 and 68–88; these read FYPS…PSFL and FPWF…PWLL.

The protein localises to the membrane. This is an uncharacterized protein from Saccharomyces cerevisiae (strain ATCC 204508 / S288c) (Baker's yeast).